We begin with the raw amino-acid sequence, 179 residues long: Large ribosomal subunit protein uL6 (179 aa).

It belongs to the universal ribosomal protein uL6 family. In terms of assembly, part of the 50S ribosomal subunit.

Its function is as follows. This protein binds to the 23S rRNA, and is important in its secondary structure. It is located near the subunit interface in the base of the L7/L12 stalk, and near the tRNA binding site of the peptidyltransferase center. This chain is Large ribosomal subunit protein uL6, found in Mycobacterium tuberculosis (strain ATCC 25618 / H37Rv).